Here is a 396-residue protein sequence, read N- to C-terminus: Vacuolar protease A (396 aa).

Positions 1–17 are cleaved as a signal peptide; the sequence is MKGALLTAAMLLGSAQA. A propeptide spans 18–70 (activation peptide); sequence GVHTMKLKKVPLAEQLESVPIDVQVQHLGQKYTGLRTESHTQAMFKATDAQVS. One can recognise a Peptidase A1 domain in the interval 85 to 392; it reads YFSEITIGTP…DLGADTVGIA (308 aa). Asp-103 is an active-site residue. Cys-116 and Cys-121 are disulfide-bonded. An N-linked (GlcNAc...) asparagine glycan is attached at Asn-138. Asp-284 is a catalytic residue. A disulfide bond links Cys-318 and Cys-351. An N-linked (GlcNAc...) asparagine glycan is attached at Asn-335.

It belongs to the peptidase A1 family.

It is found in the vacuole. In Neurospora crassa (strain ATCC 24698 / 74-OR23-1A / CBS 708.71 / DSM 1257 / FGSC 987), this protein is Vacuolar protease A (pep-4).